A 160-amino-acid chain; its full sequence is Salivary gland broad-spectrum antiviral protein (160 aa).

The helical transmembrane segment at 17 to 37 (VALGLYFTVVVFVLFITSVNL) threads the bilayer. N-linked (GlcNAc...) asparagine glycosylation is found at asparagine 62 and asparagine 145.

In terms of tissue distribution, salivary gland (at protein level).

The protein resides in the membrane. In terms of biological role, (Microbial infection) Modulates replication of Zika virus in salivary glands. (Microbial infection) Modulates replication of dengue virus type 2 in salivary glands. Its function is as follows. (Microbial infection) Modulates replication of chikungunya virus in salivary glands. This is Salivary gland broad-spectrum antiviral protein from Aedes aegypti (Yellowfever mosquito).